The primary structure comprises 288 residues: Elongation factor Ts (288 aa).

The tract at residues 79 to 82 (TDFV) is involved in Mg(2+) ion dislocation from EF-Tu.

The protein belongs to the EF-Ts family.

It is found in the cytoplasm. Functionally, associates with the EF-Tu.GDP complex and induces the exchange of GDP to GTP. It remains bound to the aminoacyl-tRNA.EF-Tu.GTP complex up to the GTP hydrolysis stage on the ribosome. The sequence is that of Elongation factor Ts from Ehrlichia ruminantium (strain Gardel).